A 436-amino-acid polypeptide reads, in one-letter code: Protein FAM83A (436 aa).

A DUF1669 region spans residues 1–298 (MSRSRHVGKI…LYASSKPLMG (298 aa)). The disordered stretch occupies residues 73–95 (AQAKEPPDAPDSAGGAESGPRGL). Phosphoserine is present on residues Ser-301, Ser-329, Ser-350, and Ser-359. Residues 302–371 (PRLVAPFQPN…APIPPTVPRL (70 aa)) are disordered. Residues 321–349 (LSGTSDSASDRTSSNPFSSLSTGSNAHNQ) are compositionally biased toward polar residues. Positions 350-359 (SLSTSSGPSS) are enriched in low complexity.

Belongs to the FAM83 family. Directly interacts (via DUF1669) with casein kinase isoforms CSNK1A1, CSNK1A1L, CSNK1D and CSNK1E. Post-translationally, may be phosphorylated upon EGFR activation. In terms of tissue distribution, widely expressed, with relatively higher expression levels in adipose tissues, especially in epididymal and inguinal white adipose tissue (at protein level).

It localises to the cytoplasm. The protein resides in the mitochondrion. In terms of biological role, involved in mitochondrial maintenance during adipogenesis. May be acting by playing a role in the maintenance of normal mitochondrial function. This Mus musculus (Mouse) protein is Protein FAM83A.